A 281-amino-acid polypeptide reads, in one-letter code: Protoheme IX farnesyltransferase (281 aa).

The next 9 membrane-spanning stretches (helical) occupy residues 13 to 33, 38 to 58, 85 to 105, 107 to 127, 132 to 152, 161 to 181, 206 to 226, 227 to 247, and 261 to 281; these read VIWL…GPLV, LIEL…FNMY, ALTF…LWLG, WVTL…TIML, WLNI…GWIM, ILLS…LAYY, IISI…QLYM, AKLI…IVTI, and MFKA…ISRI.

This sequence belongs to the UbiA prenyltransferase family. Protoheme IX farnesyltransferase subfamily.

It localises to the cell membrane. The enzyme catalyses heme b + (2E,6E)-farnesyl diphosphate + H2O = Fe(II)-heme o + diphosphate. It functions in the pathway porphyrin-containing compound metabolism; heme O biosynthesis; heme O from protoheme: step 1/1. In terms of biological role, converts heme B (protoheme IX) to heme O by substitution of the vinyl group on carbon 2 of heme B porphyrin ring with a hydroxyethyl farnesyl side group. In Caldivirga maquilingensis (strain ATCC 700844 / DSM 13496 / JCM 10307 / IC-167), this protein is Protoheme IX farnesyltransferase.